The chain runs to 420 residues: Tubulin-specific chaperone C (420 aa).

Residues 9–142 (NNNNDEENSK…QIDKSKEKYM (134 aa)) are a coiled coil. Residues 31–49 (KQRLQSKLEKREISNKEQI) show a composition bias toward basic and acidic residues. Disordered regions lie at residues 31–52 (KQRLQSKLEKREISNKEQIDQS), 138–193 (KEKY…NNNK), and 222–257 (EIGNQDINNNNNNNNNNNNNNNNNNNNNNNNNNNNN). 2 stretches are compositionally biased toward low complexity: residues 172-192 (ETFNNNNNNNNDNDNTDNNNN) and 228-257 (INNNNNNNNNNNNNNNNNNNNNNNNNNNNN). A C-CAP/cofactor C-like domain is found at 216 to 366 (PPKKEEEIGN…LKQQQQQQQQ (151 aa)).

This sequence belongs to the TBCC family. In terms of assembly, supercomplex made of cofactors A to E. Cofactors A and D function by capturing and stabilizing tubulin in a quasi-native conformation. Cofactor E binds to the cofactor D-tubulin complex; interaction with cofactor C then causes the release of tubulin polypeptides that are committed to the native state.

Functionally, tubulin-folding protein; involved in the final step of the tubulin folding pathway. The chain is Tubulin-specific chaperone C (tbcc) from Dictyostelium discoideum (Social amoeba).